Consider the following 370-residue polypeptide: 2-Hydroxyacid oxidase 1 (370 aa).

An FMN hydroxy acid dehydrogenase domain is found at 1-365 (MLPRLICIND…DKTLVRKNPL (365 aa)). Glyoxylate is bound at residue tyrosine 26. Residues 79–81 (ATA), serine 108, and glutamine 130 each bind FMN. Residue tyrosine 132 participates in glyoxylate binding. Threonine 158 contacts FMN. Arginine 167 provides a ligand contact to glyoxylate. N6-succinyllysine is present on lysine 184. A phosphoserine mark is found at serine 194 and serine 230. FMN-binding residues include lysine 236 and serine 258. Glyoxylate-binding residues include histidine 260 and arginine 263. Histidine 260 (proton acceptor) is an active-site residue. FMN-binding positions include 291–295 (DGGVR) and 314–315 (GR). The short motif at 368–370 (SKI) is the Microbody targeting signal element.

This sequence belongs to the FMN-dependent alpha-hydroxy acid dehydrogenase family. As to quaternary structure, homotetramer. FMN serves as cofactor. As to expression, highly expressed in liver.

The protein localises to the peroxisome matrix. It catalyses the reaction a (2S)-2-hydroxycarboxylate + O2 = a 2-oxocarboxylate + H2O2. The catalysed reaction is glycolate + O2 = glyoxylate + H2O2. It carries out the reaction glyoxylate + O2 + H2O = oxalate + H2O2 + H(+). The enzyme catalyses 2-hydroxyhexadecanoate + O2 = 2-oxohexadecanoate + H2O2. It catalyses the reaction 2-hydroxyoctanoate + O2 = 2-oxooctanoate + H2O2. The protein operates within amino-acid biosynthesis; glycine biosynthesis. Inhibited by its product oxalate. Inhibited by high concentrations of dichlorophenolindophenol (DCIP) in vitro. Its function is as follows. Broad substrate specificity (S)-2-hydroxy-acid oxidase that preferentially oxidizes glycolate. The glyoxylate produced by the oxidation of glycolate can then be utilized by alanine-glyoxylate aminotransferase for the peroxisomal synthesis of glycine; this pathway appears to be an important step for the detoxification of glyoxylate which, if allowed to accumulate, may be metabolized to oxalate with formation of kidney stones. Can also catalyze the oxidation of glyoxylate, and long chain hydroxyacids such as 2-hydroxyhexadecanoate and 2-hydroxyoctanoate, albeit with much lower catalytic efficiency. Active in vitro with the artificial electron acceptor 2,6-dichlorophenolindophenol (DCIP), but O2 is believed to be the physiological electron acceptor, leading to the production of H2O2. Is not active on L-lactate and 2-hydroxybutanoate. This is 2-Hydroxyacid oxidase 1 from Homo sapiens (Human).